The following is a 126-amino-acid chain: Urease subunit beta (126 aa).

Belongs to the urease beta subunit family. As to quaternary structure, heterotrimer of UreA (gamma), UreB (beta) and UreC (alpha) subunits. Three heterotrimers associate to form the active enzyme.

The protein localises to the cytoplasm. It carries out the reaction urea + 2 H2O + H(+) = hydrogencarbonate + 2 NH4(+). The protein operates within nitrogen metabolism; urea degradation; CO(2) and NH(3) from urea (urease route): step 1/1. The chain is Urease subunit beta from Gloeothece citriformis (strain PCC 7424) (Cyanothece sp. (strain PCC 7424)).